A 360-amino-acid polypeptide reads, in one-letter code: Alpha-methylacyl-CoA racemase (360 aa).

Residues arginine 38, 59–62 (ADLK), 83–85 (GYR), arginine 91, and 125–130 (GHDINY) each bind substrate. Histidine 126 functions as the Proton acceptor in the catalytic mechanism. Aspartate 156 functions as the Proton donor in the catalytic mechanism.

It belongs to the CoA-transferase III family. In terms of assembly, homodimer.

The catalysed reaction is a (2S)-2-methylacyl-CoA = a (2R)-2-methylacyl-CoA. It carries out the reaction (2S)-2-methyltetradecanoyl-CoA = (2R)-2-methyltetradecanoyl-CoA. The enzyme catalyses (2R)-pristanoyl-CoA = (2S)-pristanoyl-CoA. It catalyses the reaction (25S)-3-oxocholest-4-en-26-oyl-CoA = (25R)-3-oxocholest-4-en-26-oyl-CoA. The catalysed reaction is (2S)-ibuprofenoyl-CoA = (2R)-ibuprofenoyl-CoA. With respect to regulation, inactivated by N,N-dialkylcarbamoyl-CoA substrate-product analogs. Catalyzes the epimerization of (2R)- and (2S)-methylacyl-coenzyme A (CoA) thioesters. Accepts as substrates a wide range of alpha-methylacyl-CoAs, including (2R)-2-methylmyristoyl-CoA and (2S)-2-methylmyristoyl-CoA, (2R)-pristanoyl-CoA and (2S)-pristanoyl-CoA, and the cholesterol esters (25R)-3-oxo-cholest-4-en-26-oyl-CoA and (25S)-3-oxo-cholest-4-en-26-oyl-CoA. Can also catalyze the interconversion of the non-physiologic substrates (2R)-ibuprofenoyl-CoA and (2S)-ibuprofenoyl-CoA, which are potential competitive inhibitors of the enzyme. This chain is Alpha-methylacyl-CoA racemase, found in Mycobacterium tuberculosis (strain ATCC 25618 / H37Rv).